The primary structure comprises 447 residues: Na(+)/H(+) antiporter NhaA 2 (447 aa).

The next 10 helical transmembrane spans lie at 34-54 (VGGVILLVAAAAALIWANSPW), 77-97 (LTLGAWAADGLLAIFFLVVGL), 115-135 (ALPIAAAVGGMVVPALIFVLV), 146-166 (GWAIPTATDIAFAVAVLAVIG), 176-196 (FLLTLAVVDDLLAITVIAVFY), 200-220 (INGLALALAAVPLALFALCVQ), 290-310 (VSAGIAIPVFAFFAAGVSIGG), 321-341 (PITLGIVLGLVLGKPIGIVLT), 359-379 (WVDVVGMSMLAGIGFTVSLLI), and 393-413 (FVKIGVLFGSLLAAGVAAVVL).

It belongs to the NhaA Na(+)/H(+) (TC 2.A.33) antiporter family.

Its subcellular location is the cell membrane. It carries out the reaction Na(+)(in) + 2 H(+)(out) = Na(+)(out) + 2 H(+)(in). Its function is as follows. Na(+)/H(+) antiporter that extrudes sodium in exchange for external protons. The polypeptide is Na(+)/H(+) antiporter NhaA 2 (Mycolicibacterium gilvum (strain PYR-GCK) (Mycobacterium gilvum (strain PYR-GCK))).